We begin with the raw amino-acid sequence, 342 residues long: N-acetyl-gamma-glutamyl-phosphate reductase (342 aa).

C149 is a catalytic residue.

This sequence belongs to the NAGSA dehydrogenase family. Type 1 subfamily.

The protein localises to the cytoplasm. The catalysed reaction is N-acetyl-L-glutamate 5-semialdehyde + phosphate + NADP(+) = N-acetyl-L-glutamyl 5-phosphate + NADPH + H(+). Its pathway is amino-acid biosynthesis; L-arginine biosynthesis; N(2)-acetyl-L-ornithine from L-glutamate: step 3/4. Its function is as follows. Catalyzes the NADPH-dependent reduction of N-acetyl-5-glutamyl phosphate to yield N-acetyl-L-glutamate 5-semialdehyde. This Nitrosospira multiformis (strain ATCC 25196 / NCIMB 11849 / C 71) protein is N-acetyl-gamma-glutamyl-phosphate reductase.